The sequence spans 219 residues: MSEITIGVLSLQGDFEPHINHFIKLQIPSLNIIQVRNVHDLGLCDGLVIPGGESTTVRRCCAYENDTLYNALVHFIHVLKKPIWGTCAGCILLSKNVENIKLYSNFGNKFSFGGLDITICRNFYGSQNDSFICSLNIISDSSAFKKDLTAACIRAPYIREILSDEVKVLATFSHESYGPNIIAAVEQNNCLGTVFHPELLPHTAFQQYFYEKVKNYKYS.

Position 52–54 (52–54 (GES)) interacts with L-glutamine. Residue cysteine 87 is the Nucleophile of the active site. L-glutamine is bound by residues arginine 121 and 153–154 (IR). Residues histidine 196 and glutamate 198 each act as charge relay system in the active site.

This sequence belongs to the glutaminase PdxT/SNO family. In terms of assembly, in the presence of Pdx1, forms a dodecamer of heterodimers. Only shows activity in the heterodimer.

It localises to the cytoplasm. The catalysed reaction is aldehydo-D-ribose 5-phosphate + D-glyceraldehyde 3-phosphate + L-glutamine = pyridoxal 5'-phosphate + L-glutamate + phosphate + 3 H2O + H(+). It catalyses the reaction L-glutamine + H2O = L-glutamate + NH4(+). It functions in the pathway cofactor biosynthesis; pyridoxal 5'-phosphate biosynthesis. In terms of biological role, catalyzes the hydrolysis of glutamine to glutamate and ammonia as part of the biosynthesis of pyridoxal 5'-phosphate. The resulting ammonia molecule is channeled to the active site of Pdx1. This is Pyridoxal 5'-phosphate synthase subunit PDX2 from Plasmodium falciparum (isolate 3D7).